Reading from the N-terminus, the 458-residue chain is Fumarate hydratase class II 2 (458 aa).

Residues 98 to 100 (SGT), 123 to 126 (NPND), 133 to 135 (SSN), and T181 contribute to the substrate site. H182 functions as the Proton donor/acceptor in the catalytic mechanism. S312 is an active-site residue. Residues S313 and 318-320 (KVN) each bind substrate.

This sequence belongs to the class-II fumarase/aspartase family. Fumarase subfamily. Homotetramer.

The protein resides in the cytoplasm. It catalyses the reaction (S)-malate = fumarate + H2O. The protein operates within carbohydrate metabolism; tricarboxylic acid cycle; (S)-malate from fumarate: step 1/1. Functionally, involved in the TCA cycle. Catalyzes the stereospecific interconversion of fumarate to L-malate. The protein is Fumarate hydratase class II 2 of Pseudomonas aeruginosa (strain ATCC 15692 / DSM 22644 / CIP 104116 / JCM 14847 / LMG 12228 / 1C / PRS 101 / PAO1).